Consider the following 274-residue polypeptide: Triosephosphate isomerase (274 aa).

31–33 (NWK) contacts substrate. His-118 functions as the Electrophile in the catalytic mechanism. Glu-188 serves as the catalytic Proton acceptor. Substrate is bound by residues Gly-194, Ser-234, and 255-256 (GG).

Belongs to the triosephosphate isomerase family. Homodimer.

It localises to the cytoplasm. The enzyme catalyses D-glyceraldehyde 3-phosphate = dihydroxyacetone phosphate. It participates in carbohydrate biosynthesis; gluconeogenesis. Its pathway is carbohydrate degradation; glycolysis; D-glyceraldehyde 3-phosphate from glycerone phosphate: step 1/1. Its function is as follows. Involved in the gluconeogenesis. Catalyzes stereospecifically the conversion of dihydroxyacetone phosphate (DHAP) to D-glyceraldehyde-3-phosphate (G3P). The sequence is that of Triosephosphate isomerase from Chlamydia trachomatis serovar A (strain ATCC VR-571B / DSM 19440 / HAR-13).